The chain runs to 321 residues: Fibronectin type III domain-containing protein 8 (321 aa).

The Fibronectin type-III domain occupies valine 175–threonine 277.

This chain is Fibronectin type III domain-containing protein 8 (Fndc8), found in Mus musculus (Mouse).